A 133-amino-acid polypeptide reads, in one-letter code: UPF0292 protein TGAM_1777 (133 aa).

The Toprim domain occupies 20–100 (EGALIVEGLR…RVDVETRREL (81 aa)). Mg(2+) contacts are provided by Glu-26, Asp-69, and Asp-71.

The protein belongs to the UPF0292 family. Requires Mg(2+) as cofactor.

This Thermococcus gammatolerans (strain DSM 15229 / JCM 11827 / EJ3) protein is UPF0292 protein TGAM_1777.